The primary structure comprises 375 residues: Putative F-box/kelch-repeat protein At3g24610 (375 aa).

Residues 1–27 form a disordered region; that stretch reads MSNEAPEVEPHSKRRKKEASPSSSSGF. Residues 25–71 form the F-box domain; the sequence is SGFLQSLPEAVAMICLARVSRLDHAALSLVSKSCRSMVLSPELYQTR. The stretch at 138–183 is one Kelch repeat; it reads KINVWGGCKYKHYYDWGEVFDPKTQTWADMSIPKPVREEKIYVVDS.

In Arabidopsis thaliana (Mouse-ear cress), this protein is Putative F-box/kelch-repeat protein At3g24610.